Here is a 1845-residue protein sequence, read N- to C-terminus: Proteasome activator complex subunit 4 (1845 aa).

Over residues 1-13 the composition is skewed to basic and acidic residues; sequence MEPAERAGGRDPL. Positions 1–26 are disordered; sequence MEPAERAGGRDPLEPGGRPGPDPQGF. 2 HEAT repeats span residues 475-519 and 1000-1039; these read PEGP…LVDC and NFCC…NHSG. Ser1123 is modified (phosphoserine). 2 HEAT repeats span residues 1181–1219 and 1356–1394; these read RVLP…QLKR and DAFL…GSKH. At Ser1616 the chain carries Phosphoserine. 2 HEAT repeats span residues 1638–1676 and 1682–1720; these read PHQV…YNLF and EDAV…CNFL. The segment at 1652-1740 is bromodomain-like (BRDL); the sequence is ARSSSWHARY…EQLCKTKLPK (89 aa).

It belongs to the BLM10 family. Homodimer. Component of the spermatoproteasome, a form of the proteasome specifically found in testis. Interacts with the 20S and 26S proteasomes. In terms of processing, phosphorylated.

The protein resides in the cytoplasm. Its subcellular location is the cytosol. It is found in the nucleus. It localises to the nucleus speckle. Associated component of the proteasome that specifically recognizes acetylated histones and promotes ATP- and ubiquitin-independent degradation of core histones during spermatogenesis and DNA damage response. Recognizes and binds acetylated histones via its bromodomain-like (BRDL) region and activates the proteasome by opening the gated channel for substrate entry. Binds to the core proteasome via its C-terminus, which occupies the same binding sites as the proteasomal ATPases, opening the closed structure of the proteasome via an active gating mechanism. Component of the spermatoproteasome, a form of the proteasome specifically found in testis: binds to acetylated histones and promotes degradation of histones, thereby participating actively to the exchange of histones during spermatogenesis. Also involved in DNA damage response in somatic cells, by promoting degradation of histones following DNA double-strand breaks. The polypeptide is Proteasome activator complex subunit 4 (PSME4) (Bos taurus (Bovine)).